Reading from the N-terminus, the 343-residue chain is Heat-inducible transcription repressor HrcA (343 aa).

Belongs to the HrcA family.

Functionally, negative regulator of class I heat shock genes (grpE-dnaK-dnaJ and groELS operons). Prevents heat-shock induction of these operons. This is Heat-inducible transcription repressor HrcA from Clostridium botulinum (strain Eklund 17B / Type B).